A 342-amino-acid chain; its full sequence is N-acetyl-gamma-glutamyl-phosphate reductase (342 aa).

C149 is a catalytic residue.

This sequence belongs to the NAGSA dehydrogenase family. Type 1 subfamily.

It localises to the cytoplasm. It catalyses the reaction N-acetyl-L-glutamate 5-semialdehyde + phosphate + NADP(+) = N-acetyl-L-glutamyl 5-phosphate + NADPH + H(+). It functions in the pathway amino-acid biosynthesis; L-arginine biosynthesis; N(2)-acetyl-L-ornithine from L-glutamate: step 3/4. In terms of biological role, catalyzes the NADPH-dependent reduction of N-acetyl-5-glutamyl phosphate to yield N-acetyl-L-glutamate 5-semialdehyde. This chain is N-acetyl-gamma-glutamyl-phosphate reductase, found in Roseobacter denitrificans (strain ATCC 33942 / OCh 114) (Erythrobacter sp. (strain OCh 114)).